The sequence spans 106 residues: ATP-dependent Clp protease adapter protein ClpS (106 aa).

This sequence belongs to the ClpS family. As to quaternary structure, binds to the N-terminal domain of the chaperone ClpA.

Involved in the modulation of the specificity of the ClpAP-mediated ATP-dependent protein degradation. The sequence is that of ATP-dependent Clp protease adapter protein ClpS from Aliivibrio fischeri (strain ATCC 700601 / ES114) (Vibrio fischeri).